A 510-amino-acid chain; its full sequence is UDP-N-acetylmuramoyl-tripeptide--D-alanyl-D-alanine ligase (510 aa).

136–142 (GSSGKTS) provides a ligand contact to ATP.

The protein belongs to the MurCDEF family. MurF subfamily.

The protein resides in the cytoplasm. It carries out the reaction D-alanyl-D-alanine + UDP-N-acetyl-alpha-D-muramoyl-L-alanyl-gamma-D-glutamyl-meso-2,6-diaminopimelate + ATP = UDP-N-acetyl-alpha-D-muramoyl-L-alanyl-gamma-D-glutamyl-meso-2,6-diaminopimeloyl-D-alanyl-D-alanine + ADP + phosphate + H(+). The protein operates within cell wall biogenesis; peptidoglycan biosynthesis. Involved in cell wall formation. Catalyzes the final step in the synthesis of UDP-N-acetylmuramoyl-pentapeptide, the precursor of murein. The polypeptide is UDP-N-acetylmuramoyl-tripeptide--D-alanyl-D-alanine ligase (Mycobacterium bovis (strain ATCC BAA-935 / AF2122/97)).